The sequence spans 249 residues: Pyridoxine 5'-phosphate synthase (249 aa).

A 3-amino-2-oxopropyl phosphate-binding site is contributed by N7. 1-deoxy-D-xylulose 5-phosphate is bound at residue 9 to 10 (DH). R18 contacts 3-amino-2-oxopropyl phosphate. The Proton acceptor role is filled by H43. Residues R45 and H50 each coordinate 1-deoxy-D-xylulose 5-phosphate. The active-site Proton acceptor is the E70. Residue T100 coordinates 1-deoxy-D-xylulose 5-phosphate. Residue H190 is the Proton donor of the active site. 3-amino-2-oxopropyl phosphate-binding positions include G191 and 212-213 (GH).

The protein belongs to the PNP synthase family. Homooctamer; tetramer of dimers.

The protein localises to the cytoplasm. The enzyme catalyses 3-amino-2-oxopropyl phosphate + 1-deoxy-D-xylulose 5-phosphate = pyridoxine 5'-phosphate + phosphate + 2 H2O + H(+). The protein operates within cofactor biosynthesis; pyridoxine 5'-phosphate biosynthesis; pyridoxine 5'-phosphate from D-erythrose 4-phosphate: step 5/5. Its function is as follows. Catalyzes the complicated ring closure reaction between the two acyclic compounds 1-deoxy-D-xylulose-5-phosphate (DXP) and 3-amino-2-oxopropyl phosphate (1-amino-acetone-3-phosphate or AAP) to form pyridoxine 5'-phosphate (PNP) and inorganic phosphate. The protein is Pyridoxine 5'-phosphate synthase of Synechococcus sp. (strain CC9902).